The sequence spans 1463 residues: Alpha-agarase (1463 aa).

The N-terminal stretch at 1–27 (MITSSKKIVSAMLSTSLWIGVASAAYA) is a signal peptide. A propeptide spanning residues 28–684 (ETTNVEAEGY…PSTLSESIFT (657 aa)) is cleaved from the precursor. Disordered stretches follow at residues 166–191 (VTPE…PGTP) and 512–549 (TDDI…PQPG). Polar residues predominate over residues 518 to 536 (CANTPSGETANATGCSSSQ). The 144-residue stretch at 534–677 (SSQEGGGTDP…GGTNFVHPST (144 aa)) folds into the PA14 domain. The 132-residue stretch at 701–832 (IIVELESFVF…QWSGDRVRFT (132 aa)) folds into the CBM6 domain.

The protein belongs to the glycosyl hydrolase 96 family. Monomer. The cofactor is Ca(2+).

The enzyme catalyses Endohydrolysis of 1,3-alpha-L-galactosidic linkages in agarose, yielding agarotetraose as the major product.. In terms of biological role, alpha-agarase. Hydrolyzes agarose, agarohexaose, neoagarohexaose and porphyran. Hydrolysis of porphyran by this enzyme improves its antioxidant activity. Does not hydrolyze kappa-carrageenan, iota-carrageenen or lambda-carrageenan. The polypeptide is Alpha-agarase (Thalassotalea agarivorans (Thalassomonas agarivorans)).